Consider the following 289-residue polypeptide: Eukaryotic translation initiation factor 3 subunit G (289 aa).

The disordered stretch occupies residues 1 to 33; sequence MSRPTKADWADDEEFDDPSALPPQQITTNKDGT. One can recognise an RRM domain in the interval 209 to 287; that stretch reads ATLRVTNVSE…LILRVEFAKR (79 aa).

It belongs to the eIF-3 subunit G family. Component of the eukaryotic translation initiation factor 3 (eIF-3) complex.

The protein localises to the cytoplasm. Its function is as follows. RNA-binding component of the eukaryotic translation initiation factor 3 (eIF-3) complex, which is involved in protein synthesis of a specialized repertoire of mRNAs and, together with other initiation factors, stimulates binding of mRNA and methionyl-tRNAi to the 40S ribosome. The eIF-3 complex specifically targets and initiates translation of a subset of mRNAs involved in cell proliferation. This subunit can bind 18S rRNA. This chain is Eukaryotic translation initiation factor 3 subunit G (tif35), found in Emericella nidulans (strain FGSC A4 / ATCC 38163 / CBS 112.46 / NRRL 194 / M139) (Aspergillus nidulans).